Here is a 618-residue protein sequence, read N- to C-terminus: Elongation factor 4 (618 aa).

Residues 17–198 enclose the tr-type G domain; the sequence is AIIRNFCIIA…KIVRDLPAPE (182 aa). Residues 29–34 and 145–148 each bind GTP; these read DHGKST and NKID.

This sequence belongs to the TRAFAC class translation factor GTPase superfamily. Classic translation factor GTPase family. LepA subfamily.

It localises to the cell membrane. It carries out the reaction GTP + H2O = GDP + phosphate + H(+). In terms of biological role, required for accurate and efficient protein synthesis under certain stress conditions. May act as a fidelity factor of the translation reaction, by catalyzing a one-codon backward translocation of tRNAs on improperly translocated ribosomes. Back-translocation proceeds from a post-translocation (POST) complex to a pre-translocation (PRE) complex, thus giving elongation factor G a second chance to translocate the tRNAs correctly. Binds to ribosomes in a GTP-dependent manner. This Pseudarthrobacter chlorophenolicus (strain ATCC 700700 / DSM 12829 / CIP 107037 / JCM 12360 / KCTC 9906 / NCIMB 13794 / A6) (Arthrobacter chlorophenolicus) protein is Elongation factor 4.